The chain runs to 342 residues: Ferrochelatase (342 aa).

Fe cation-binding residues include His188 and Glu268.

This sequence belongs to the ferrochelatase family.

The protein resides in the cytoplasm. It carries out the reaction heme b + 2 H(+) = protoporphyrin IX + Fe(2+). It functions in the pathway porphyrin-containing compound metabolism; protoheme biosynthesis; protoheme from protoporphyrin-IX: step 1/1. In terms of biological role, catalyzes the ferrous insertion into protoporphyrin IX. This is Ferrochelatase from Rickettsia conorii (strain ATCC VR-613 / Malish 7).